Consider the following 92-residue polypeptide: Small ribosomal subunit protein uS19 (92 aa).

This sequence belongs to the universal ribosomal protein uS19 family.

In terms of biological role, protein S19 forms a complex with S13 that binds strongly to the 16S ribosomal RNA. The sequence is that of Small ribosomal subunit protein uS19 from Exiguobacterium sibiricum (strain DSM 17290 / CCUG 55495 / CIP 109462 / JCM 13490 / 255-15).